A 793-amino-acid polypeptide reads, in one-letter code: DNA mismatch repair protein MutS (793 aa).

Residue 589–596 coordinates ATP; the sequence is GPNMSGKS.

Belongs to the DNA mismatch repair MutS family.

In terms of biological role, this protein is involved in the repair of mismatches in DNA. It is possible that it carries out the mismatch recognition step. This protein has a weak ATPase activity. This chain is DNA mismatch repair protein MutS, found in Thermotoga petrophila (strain ATCC BAA-488 / DSM 13995 / JCM 10881 / RKU-1).